The primary structure comprises 173 residues: Mesencephalic astrocyte-derived neurotrophic factor homolog (173 aa).

An N-terminal signal peptide occupies residues 1-22 (MNTSQIVLMFCLVVGVAQTALA). 4 disulfides stabilise this stretch: Cys28-Cys114, Cys31-Cys103, Cys61-Cys72, and Cys148-Cys151.

Belongs to the ARMET family.

The protein resides in the secreted. Functionally, required during the maturation of the embryonic nervous system for maintenance of neuronal and cuticular connectivity. Essential for maintenance of dopaminergic neurons and dopamine levels. In Drosophila grimshawi (Hawaiian fruit fly), this protein is Mesencephalic astrocyte-derived neurotrophic factor homolog.